A 210-amino-acid chain; its full sequence is MIAVINYGAGNLPNAVRALEYVQAPIEVVTDPAAVRAAQAVVLPGVGATADTMRSLREMGMDSAIREVIARGTPFLGICVGMQVLAEQSEEFGLHECLGLVPGTIRRFDQGLKVPQIGWNGVQHDGSALWDGIPNGAEFYFVHSYYLATDDVALVTGRTEYGLNFPAAIARDNITAVQFHPEKSGQWGLKLLGNWVELALSRGSGVGDRA.

The region spanning 1–205 (MIAVINYGAG…VELALSRGSG (205 aa)) is the Glutamine amidotransferase type-1 domain. Catalysis depends on C79, which acts as the Nucleophile. Catalysis depends on residues H180 and E182.

Heterodimer of HisH and HisF.

It is found in the cytoplasm. The catalysed reaction is 5-[(5-phospho-1-deoxy-D-ribulos-1-ylimino)methylamino]-1-(5-phospho-beta-D-ribosyl)imidazole-4-carboxamide + L-glutamine = D-erythro-1-(imidazol-4-yl)glycerol 3-phosphate + 5-amino-1-(5-phospho-beta-D-ribosyl)imidazole-4-carboxamide + L-glutamate + H(+). It carries out the reaction L-glutamine + H2O = L-glutamate + NH4(+). The protein operates within amino-acid biosynthesis; L-histidine biosynthesis; L-histidine from 5-phospho-alpha-D-ribose 1-diphosphate: step 5/9. Functionally, IGPS catalyzes the conversion of PRFAR and glutamine to IGP, AICAR and glutamate. The HisH subunit catalyzes the hydrolysis of glutamine to glutamate and ammonia as part of the synthesis of IGP and AICAR. The resulting ammonia molecule is channeled to the active site of HisF. This is Imidazole glycerol phosphate synthase subunit HisH from Herpetosiphon aurantiacus (strain ATCC 23779 / DSM 785 / 114-95).